The following is a 439-amino-acid chain: Lipase 1 (439 aa).

Positions 1 to 24 (MRCSLRMQLLLLLGLCVFISRIQG) are cleaved as a signal peptide. A disordered region spans residues 28–60 (GGEEDEEDEEEEEEEEESVEDETPEDRLQRKNI). Residues 29-51 (GEEDEEDEEEEEEEEESVEDETP) show a composition bias toward acidic residues. Residues Asn-124 and Asn-151 are each glycosylated (N-linked (GlcNAc...) asparagine). The active-site Charge relay system is Ser-197. Asn-346 and Asn-379 each carry an N-linked (GlcNAc...) asparagine glycan. Catalysis depends on His-393, which acts as the Charge relay system. N-linked (GlcNAc...) asparagine glycosylation is present at Asn-426.

Belongs to the AB hydrolase superfamily. Lipase family. In 14 hours embryos expression is seen in the foregut/midgut boundary.

It is found in the secreted. Could be a digestive enzyme. This Drosophila melanogaster (Fruit fly) protein is Lipase 1 (Lip1).